The following is a 1094-amino-acid chain: AP-3 complex subunit beta-1 (1094 aa).

Polar residues predominate over residues 1–11 (MSSNSFPYNEQ). 2 disordered regions span residues 1–31 (MSSNSFPYNEQSGGGEATELGQEATSTISPS) and 268–292 (DNGKNFYESDDDQKEKTDKKKKPYT). Phosphoserine is present on residues Ser276 and Ser609. Residues 662–811 (PAGKAKQENS…EKKTKQDRTP (150 aa)) are disordered. Residues 666 to 677 (AKQENSAKKFYS) are compositionally biased toward basic and acidic residues. Composition is skewed to acidic residues over residues 678 to 696 (ESEEEEDSSDSSSDSESES) and 705 to 726 (ESGEEGDSNEDSSEDSSSEQDS). Basic and acidic residues-rich tracts occupy residues 727–738 (ESGRESGLENKR) and 748–764 (GKSDSEDGEKENEKSKT). Residues Ser750 and Ser752 each carry the phosphoserine modification. Residues 765-777 (SDSSNDESSSIED) are compositionally biased toward low complexity. Over residues 778–791 (SSSDSESESEPESE) the composition is skewed to acidic residues. Over residues 792-811 (SESRRVTKEKEKKTKQDRTP) the composition is skewed to basic and acidic residues.

Belongs to the adaptor complexes large subunit family. In terms of assembly, adaptor protein complex 3 (AP-3) is a heterotetramer composed of two large adaptins (delta-type subunit AP3D1 and beta-type subunit AP3B1 or AP3B2), a medium adaptin (mu-type subunit AP3M1 or AP3M2) and a small adaptin (sigma-type subunit APS1 or AP3S2). AP-3 associates with the BLOC-1 complex. Interacts with KIF3A; interaction is direct; interaction is impaired by pyrophosphorylation of AP3B1. Post-translationally, phosphorylated on serine residues. Pyrophosphorylation by 5-diphosphoinositol pentakisphosphate (5-IP7) impairs interaction with KIF3A. Serine pyrophosphorylation is achieved by Mg(2+)-dependent, but enzyme independent transfer of a beta-phosphate from a inositol pyrophosphate to a pre-phosphorylated serine residue. As to expression, ubiquitously expressed.

It localises to the cytoplasmic vesicle. The protein localises to the clathrin-coated vesicle membrane. It is found in the golgi apparatus. Its function is as follows. Subunit of non-clathrin- and clathrin-associated adaptor protein complex 3 (AP-3) that plays a role in protein sorting in the late-Golgi/trans-Golgi network (TGN) and/or endosomes. The AP complexes mediate both the recruitment of clathrin to membranes and the recognition of sorting signals within the cytosolic tails of transmembrane cargo molecules. AP-3 appears to be involved in the sorting of a subset of transmembrane proteins targeted to lysosomes and lysosome-related organelles. In concert with the BLOC-1 complex, AP-3 is required to target cargos into vesicles assembled at cell bodies for delivery into neurites and nerve terminals. The sequence is that of AP-3 complex subunit beta-1 (AP3B1) from Homo sapiens (Human).